The primary structure comprises 302 residues: Adipolin (302 aa).

Residues 1–20 form the signal peptide; sequence MRRWAWAAVVVLLGPQLVLL. Disordered regions lie at residues 28–68 and 86–110; these read EAQR…GPEF and ALRK…PPGA. N-linked (GlcNAc...) asparagine glycosylation is present at N43. The segment covering 86–100 has biased composition (basic and acidic residues); the sequence is ALRKRCGSRDKKPRD. A C1q domain is found at 147–302; it reads LRLVGEAFHC…SSFSGLLLGT (156 aa).

It belongs to the adipolin/erythroferrone family. Homomultimer; disulfide-linked. May interact with ERFE. Processed into Adipolin fC1QTNF12 and Adipolin gC1QTNF12 by FURIN. Insulin enhances endogenous C1QTNF12 cleavage. As to expression, predominantly expressed by adipose tissues.

It is found in the secreted. Its function is as follows. Insulin-sensitizing adipocyte-secreted protein (adipokine) that regulates glucose metabolism in liver and adipose tissue. Promotes glucose uptake in adipocytes and suppresses de novo glucose production in hepatocytes via the PI3K-Akt signaling pathway. Administration lead to reduction of blood glucose. Able to attenuate inflammation in fat tissue. This chain is Adipolin, found in Homo sapiens (Human).